The primary structure comprises 189 residues: Peptidyl-tRNA hydrolase (189 aa).

Y14 is a binding site for tRNA. H19 acts as the Proton acceptor in catalysis. TRNA is bound by residues Y64, N66, and N112.

It belongs to the PTH family. Monomer.

It localises to the cytoplasm. It carries out the reaction an N-acyl-L-alpha-aminoacyl-tRNA + H2O = an N-acyl-L-amino acid + a tRNA + H(+). In terms of biological role, hydrolyzes ribosome-free peptidyl-tRNAs (with 1 or more amino acids incorporated), which drop off the ribosome during protein synthesis, or as a result of ribosome stalling. Its function is as follows. Catalyzes the release of premature peptidyl moieties from peptidyl-tRNA molecules trapped in stalled 50S ribosomal subunits, and thus maintains levels of free tRNAs and 50S ribosomes. The protein is Peptidyl-tRNA hydrolase of Clostridium botulinum (strain Okra / Type B1).